We begin with the raw amino-acid sequence, 603 residues long: UvrABC system protein C (603 aa).

A GIY-YIG domain is found at S13–V92. The region spanning E205–A240 is the UVR domain.

The protein belongs to the UvrC family. In terms of assembly, interacts with UvrB in an incision complex.

It localises to the cytoplasm. Its function is as follows. The UvrABC repair system catalyzes the recognition and processing of DNA lesions. UvrC both incises the 5' and 3' sides of the lesion. The N-terminal half is responsible for the 3' incision and the C-terminal half is responsible for the 5' incision. This Chlamydia pneumoniae (Chlamydophila pneumoniae) protein is UvrABC system protein C.